The sequence spans 398 residues: Mannitol-1-phosphate 5-dehydrogenase (398 aa).

10–21 (AVHFGAGNIGRG) lines the NAD(+) pocket. The active site involves Lys221.

Belongs to the mannitol dehydrogenase family. Monomer.

The catalysed reaction is D-mannitol 1-phosphate + NAD(+) = beta-D-fructose 6-phosphate + NADH + H(+). Functionally, catalyzes the NAD(H)-dependent interconversion of D-fructose 6-phosphate and D-mannitol 1-phosphate in the mannitol metabolic pathway. This Neurospora crassa (strain ATCC 24698 / 74-OR23-1A / CBS 708.71 / DSM 1257 / FGSC 987) protein is Mannitol-1-phosphate 5-dehydrogenase.